The following is a 409-amino-acid chain: Casein kinase II subunit alpha-1 (409 aa).

The first 35 residues, 1-35 (MIDTLFFLFFLFFDSPLRRLLLLCAVLALRAPTAH), serve as a signal peptide directing secretion. The N-linked (GlcNAc...) asparagine glycan is linked to N72. One can recognise a Protein kinase domain in the interval 110 to 395 (YEVVRKVGRG…AKEAMAHAYF (286 aa)). Residues 116–124 (VGRGKYSEV) and K139 contribute to the ATP site. N188 is a glycosylation site (N-linked (GlcNAc...) asparagine). D227 serves as the catalytic Proton acceptor.

This sequence belongs to the protein kinase superfamily. Ser/Thr protein kinase family. CK2 subfamily. As to quaternary structure, heterotetramer of two catalytic alpha subunits and two regulatory beta subunits. As to expression, seems to be present in all plant organs. But seems to be less expressed than CKA2.

The protein resides in the nucleus. Its subcellular location is the nucleolus. The catalysed reaction is L-seryl-[protein] + ATP = O-phospho-L-seryl-[protein] + ADP + H(+). It catalyses the reaction L-threonyl-[protein] + ATP = O-phospho-L-threonyl-[protein] + ADP + H(+). Inhibited by heparin. Functionally, casein kinases are operationally defined by their preferential utilization of acidic proteins such as caseins as substrates. Phosphorylates casein in vitro. The alpha chain contains the catalytic site. The tetrameric holoenzyme CK2, composed of two alpha and two beta subunits, phosphorylates the transcription factor GBFl, resulting in stimulation of its DNA binding activity. CK2 phosphorylates the transcription factor PIF1 after an exposure to light, resulting in a proteasome-dependent degradation of PIF1 and promotion of photomorphogenesis. CK2 phosphorylates translation initiation factors. May participate in the regulation of the initiation of translation. Acts as a circadian clock component that maintains the correct period length through phosphorylation of CCA1. Required for the maintenance and control of genomic stability and chromatin structure. May act as an ectokinase that phosphorylates several extracellular proteins. This Arabidopsis thaliana (Mouse-ear cress) protein is Casein kinase II subunit alpha-1.